The sequence spans 517 residues: Mitochondrial division protein fszA (517 aa).

Residues 60–64 (GGGCN), 147–149 (GTG), E178, R182, and D225 each bind GTP. A disordered region spans residues 496 to 517 (FTNGNNNKPYNNNKNTPGSNYE). Over residues 497 to 517 (TNGNNNKPYNNNKNTPGSNYE) the composition is skewed to low complexity.

This sequence belongs to the FtsZ family.

It localises to the mitochondrion matrix. In terms of biological role, probably involved in mitochondrion division process. When overexpressed, induces mitochondrial tubule formation. Binds to and hydrolyzes GTP. The protein is Mitochondrial division protein fszA (fszA) of Dictyostelium discoideum (Social amoeba).